We begin with the raw amino-acid sequence, 1398 residues long: DNA-directed RNA polymerase subunit beta' (1398 aa).

Zn(2+)-binding residues include C70, C72, C85, and C88. Mg(2+) contacts are provided by D460, D462, and D464. Residues C814, C888, C895, and C898 each coordinate Zn(2+).

This sequence belongs to the RNA polymerase beta' chain family. As to quaternary structure, the RNAP catalytic core consists of 2 alpha, 1 beta, 1 beta' and 1 omega subunit. When a sigma factor is associated with the core the holoenzyme is formed, which can initiate transcription. Mg(2+) is required as a cofactor. It depends on Zn(2+) as a cofactor.

It catalyses the reaction RNA(n) + a ribonucleoside 5'-triphosphate = RNA(n+1) + diphosphate. Its function is as follows. DNA-dependent RNA polymerase catalyzes the transcription of DNA into RNA using the four ribonucleoside triphosphates as substrates. The sequence is that of DNA-directed RNA polymerase subunit beta' from Pseudomonas putida (Arthrobacter siderocapsulatus).